The sequence spans 218 residues: Ribonuclease T (218 aa).

In terms of domain architecture, Exonuclease spans 20 to 194; sequence VVIDVETAGF…YDAERTAELF (175 aa). Mg(2+)-binding residues include D23, E25, H181, and D186. H181 (proton donor/acceptor) is an active-site residue.

It belongs to the RNase T family. As to quaternary structure, homodimer. Mg(2+) serves as cofactor.

Its function is as follows. Trims short 3' overhangs of a variety of RNA species, leaving a one or two nucleotide 3' overhang. Responsible for the end-turnover of tRNA: specifically removes the terminal AMP residue from uncharged tRNA (tRNA-C-C-A). Also appears to be involved in tRNA biosynthesis. In Baumannia cicadellinicola subsp. Homalodisca coagulata, this protein is Ribonuclease T.